The primary structure comprises 861 residues: Piwi-like protein 1 (861 aa).

Residues 1 to 13 (MTGRARARARGRA) show a composition bias toward basic residues. Positions 1–64 (MTGRARARAR…TAGGTAKSQG (64 aa)) are disordered. Arg-14 is subject to Omega-N-methylarginine; by PRMT5; alternate. Arg-14 is modified (symmetric dimethylarginine; by PRMT5; alternate). Residues 17–27 (ETAQLVGSTAS) are compositionally biased toward polar residues. Arg-49 carries the post-translational modification Omega-N-methylarginine; by PRMT5. Arg-53 bears the Omega-N-methylarginine; alternate mark. At Arg-53 the chain carries Symmetric dimethylarginine; alternate. Residues 217 to 224 (RRLLKIMN) carry the D-box motif. A PAZ domain is found at 278-391 (TVLDFMFNFY…LIPELCYLTG (114 aa)). The required for binding 2'-O-methylated 3'-end of piRNAs stretch occupies residues 316–318 (TYR). An Omega-N-methylarginine; by PRMT5 modification is found at Arg-370. Positions 479-615 (SKETRGAPLI…LQMNCKMGGE (137 aa)) are MID region. The Piwi domain occupies 555–847 (IVVCLLSSNR…LAFLVGQSIH (293 aa)). Active-site residues include Asp-632, Glu-670, Asp-702, and His-836.

It belongs to the argonaute family. Piwi subfamily. In terms of assembly, interacts (via Piwi domain) with DICER1, suggesting that it forms ribonucleoprotein RISC complexes; this interaction is regulated by HSP90AB1 activity. Interacts with MAEL, KIF17, PABPC1, PRMT5 and WDR77. Interacts (when methylated on arginine residues) with TDRD1, TDRKH/TDRD2, RNF17/TDRD4, TDRD6, TDRD7 and TDRD9. Interacts with CLOCK. Interacts with MOV10L1. Interacts with ANAPC10; interaction oly takes place following piRNA-binding. Interacts with RNF8; leading to sequester RNF8 in the cytoplasm. Interacts with TEX19. Requires Mg(2+) as cofactor. In terms of processing, arginine methylation by PRMT5 is required for the interaction with Tudor domain-containing protein (TDRD1, TDRKH/TDRD2, RNF17/TDRD4, TDRD6, TDRD7 and TDRD9) and subsequent localization to the meiotic nuage, also named P granule. Post-translationally, ubiquitinated by the anaphase promoting complex/cyclosome (APC/C) in late spermatids, leading to its degradation. Ubiquitination only takes place following piRNA-binding in adult testis. Ubiquitination and degradation in late spermatogenesis by APC/C is probably required to release RNF8 from the cytoplasm and promote histone to protamine exchange by RNF8. In terms of tissue distribution, expressed in spermatocytes and spermatids. Also detected in prostate cancer (at protein level). Detected in most fetal and adult tissues. Expressed in testes, specifically in germline cells; detected in spermatocytes and spermatids during spermatogenesis. Increased expression in testicular tumors originating from embryonic germ cells with retention of germ cells phenotype. No expression in testicular tumors of somatic origin, such as Sertoli cell and Leydig cell tumors. Overexpressed in gastric cancer cells. Isoform 3: Ubiquitously expressed, and specifically in CD34(+) hematopoietic progenitor cells but not in more differentiated cells.

The protein localises to the cytoplasm. Its function is as follows. Endoribonuclease that plays a central role in postnatal germ cells by repressing transposable elements and preventing their mobilization, which is essential for the germline integrity. Acts via the piRNA metabolic process, which mediates the repression of transposable elements during meiosis by forming complexes composed of piRNAs and Piwi proteins and governs the methylation and subsequent repression of transposons. Directly binds methylated piRNAs, a class of 24 to 30 nucleotide RNAs that are generated by a Dicer-independent mechanism and are primarily derived from transposons and other repeated sequence elements. Strongly prefers a uridine in the first position of their guide (g1U preference, also named 1U-bias). Not involved in the piRNA amplification loop, also named ping-pong amplification cycle. Acts as an endoribonuclease that cleaves transposon messenger RNAs. Besides their function in transposable elements repression, piRNAs are probably involved in other processes during meiosis such as translation regulation. Probable component of some RISC complex, which mediates RNA cleavage and translational silencing. Also plays a role in the formation of chromatoid bodies and is required for some miRNAs stability. Required to sequester RNF8 in the cytoplasm until late spermatogenesis; RNF8 being released upon ubiquitination and degradation of PIWIL1. In terms of biological role, may be a negative developmental regulator. This Homo sapiens (Human) protein is Piwi-like protein 1 (PIWIL1).